The sequence spans 395 residues: Lipid-A-disaccharide synthase (395 aa).

The protein belongs to the LpxB family.

The enzyme catalyses a lipid X + a UDP-2-N,3-O-bis[(3R)-3-hydroxyacyl]-alpha-D-glucosamine = a lipid A disaccharide + UDP + H(+). It participates in bacterial outer membrane biogenesis; LPS lipid A biosynthesis. In terms of biological role, condensation of UDP-2,3-diacylglucosamine and 2,3-diacylglucosamine-1-phosphate to form lipid A disaccharide, a precursor of lipid A, a phosphorylated glycolipid that anchors the lipopolysaccharide to the outer membrane of the cell. The polypeptide is Lipid-A-disaccharide synthase (Bordetella avium (strain 197N)).